Consider the following 213-residue polypeptide: Probable nicotinate-nucleotide adenylyltransferase (213 aa).

Belongs to the NadD family.

The enzyme catalyses nicotinate beta-D-ribonucleotide + ATP + H(+) = deamido-NAD(+) + diphosphate. It participates in cofactor biosynthesis; NAD(+) biosynthesis; deamido-NAD(+) from nicotinate D-ribonucleotide: step 1/1. In terms of biological role, catalyzes the reversible adenylation of nicotinate mononucleotide (NaMN) to nicotinic acid adenine dinucleotide (NaAD). The chain is Probable nicotinate-nucleotide adenylyltransferase from Salmonella gallinarum (strain 287/91 / NCTC 13346).